The primary structure comprises 179 residues: Large ribosomal subunit protein uL5 (179 aa).

Belongs to the universal ribosomal protein uL5 family. As to quaternary structure, part of the 50S ribosomal subunit; part of the 5S rRNA/L5/L18/L25 subcomplex. Contacts the 5S rRNA and the P site tRNA. Forms a bridge to the 30S subunit in the 70S ribosome.

This is one of the proteins that bind and probably mediate the attachment of the 5S RNA into the large ribosomal subunit, where it forms part of the central protuberance. In the 70S ribosome it contacts protein S13 of the 30S subunit (bridge B1b), connecting the 2 subunits; this bridge is implicated in subunit movement. Contacts the P site tRNA; the 5S rRNA and some of its associated proteins might help stabilize positioning of ribosome-bound tRNAs. In Yersinia pestis, this protein is Large ribosomal subunit protein uL5.